The following is a 299-amino-acid chain: Oxygen-dependent coproporphyrinogen-III oxidase (299 aa).

Substrate is bound at residue Ser-92. A divalent metal cation contacts are provided by His-96 and His-106. His-106 serves as the catalytic Proton donor. 108-110 (NVR) contributes to the substrate binding site. A divalent metal cation-binding residues include His-145 and His-175. Residues 240-275 (YVEFNLVWDRGTLFGLQTGGRTESILMSMPPLVRWE) form an important for dimerization region. 258 to 260 (GGR) serves as a coordination point for substrate.

Belongs to the aerobic coproporphyrinogen-III oxidase family. In terms of assembly, homodimer. The cofactor is a divalent metal cation.

It is found in the cytoplasm. It carries out the reaction coproporphyrinogen III + O2 + 2 H(+) = protoporphyrinogen IX + 2 CO2 + 2 H2O. It participates in porphyrin-containing compound metabolism; protoporphyrin-IX biosynthesis; protoporphyrinogen-IX from coproporphyrinogen-III (O2 route): step 1/1. In terms of biological role, involved in the heme biosynthesis. Catalyzes the aerobic oxidative decarboxylation of propionate groups of rings A and B of coproporphyrinogen-III to yield the vinyl groups in protoporphyrinogen-IX. This is Oxygen-dependent coproporphyrinogen-III oxidase from Citrobacter koseri (strain ATCC BAA-895 / CDC 4225-83 / SGSC4696).